The primary structure comprises 215 residues: Adenylate kinase (215 aa).

10–15 lines the ATP pocket; that stretch reads GAGKGT. The interval 30 to 59 is NMP; that stretch reads STGDILRANVREGTELGLAAKEYMDKGELV. Residues threonine 31, arginine 36, 57 to 59, 85 to 88, and glutamine 92 contribute to the AMP site; these read ELV and GYPR. Residues 126–162 form an LID region; sequence GRLMCNCGASYHRTFNPPKKDDVCDICGGKVFQRADD. ATP is bound at residue arginine 127. Zn(2+)-binding residues include cysteine 130 and cysteine 132. Residue 135–136 participates in ATP binding; it reads SY. Zn(2+) is bound by residues cysteine 149 and cysteine 152. 2 residues coordinate AMP: arginine 159 and arginine 170. Lysine 198 contacts ATP.

The protein belongs to the adenylate kinase family. Monomer.

It localises to the cytoplasm. The catalysed reaction is AMP + ATP = 2 ADP. The protein operates within purine metabolism; AMP biosynthesis via salvage pathway; AMP from ADP: step 1/1. Catalyzes the reversible transfer of the terminal phosphate group between ATP and AMP. Plays an important role in cellular energy homeostasis and in adenine nucleotide metabolism. The polypeptide is Adenylate kinase (Methanosarcina barkeri (strain Fusaro / DSM 804)).